Here is a 123-residue protein sequence, read N- to C-terminus: Defensin beta 118 (123 aa).

Residues 1 to 19 (MKLLLLALPILVLLPQVIP) form the signal peptide. Disulfide bonds link Cys27-Cys54, Cys34-Cys48, and Cys38-Cys55. Positions 65–123 (LPTTSPTPLSDSTPGIIDNILTIRFTTDYFEISSKKDMVEESEAGQGTQTSPPNVHHTS) are excised as a propeptide. A disordered region spans residues 100 to 123 (KDMVEESEAGQGTQTSPPNVHHTS). The segment covering 109 to 123 (GQGTQTSPPNVHHTS) has biased composition (polar residues).

The protein belongs to the beta-defensin family. The three-dimensional structure formed by the three intramolecular disulfide bridges is indispensable for antimicrobial activity. In terms of tissue distribution, high-level and epididymis-specific expression. Most abundant in the epithelium of the caput and is also present in the lumen and bound to sperm.

It localises to the secreted. In terms of biological role, host defense peptide that exhibits antimicrobial activity against both Gram-negative bacteria, such as E.coli and S.typhimurium, and Gram-positive bacteria, such as S.aureus and B.subtilis. Inhibits cell adhesion of E.coli on intestinal epithelial enterocytes. Causes rapid permeabilization of both the outer and inner membrane of E.coli, leading to morphological alterations on the bacterial surface. Binds to bacterial lipopolysaccharides (LPS) with high affinity, and may thereby be involved in immunoregulation through LPS neutralization. May contribute to epididymal innate immunity and protect the sperm against attack by microorganisms. In Macaca mulatta (Rhesus macaque), this protein is Defensin beta 118 (DEFB118).